A 201-amino-acid polypeptide reads, in one-letter code: Holliday junction branch migration complex subunit RuvA (201 aa).

The domain I stretch occupies residues 1-61; that stretch reads MIEFVKGTID…EDAFSLYGFS (61 aa). The segment at 62–140 is domain II; that stretch reads TREEKALFTK…DVVPEMIDNL (79 aa). A flexible linker region spans residues 141–150; that stretch reads FNHEARIEKQ. Residues 151–201 are domain III; the sequence is EAETALDEALEALRVLGYAEKEIKKVLPHLKEETALSTDQYVKKALQKLLK.

It belongs to the RuvA family. As to quaternary structure, homotetramer. Forms an RuvA(8)-RuvB(12)-Holliday junction (HJ) complex. HJ DNA is sandwiched between 2 RuvA tetramers; dsDNA enters through RuvA and exits via RuvB. An RuvB hexamer assembles on each DNA strand where it exits the tetramer. Each RuvB hexamer is contacted by two RuvA subunits (via domain III) on 2 adjacent RuvB subunits; this complex drives branch migration. In the full resolvosome a probable DNA-RuvA(4)-RuvB(12)-RuvC(2) complex forms which resolves the HJ.

It is found in the cytoplasm. The RuvA-RuvB-RuvC complex processes Holliday junction (HJ) DNA during genetic recombination and DNA repair, while the RuvA-RuvB complex plays an important role in the rescue of blocked DNA replication forks via replication fork reversal (RFR). RuvA specifically binds to HJ cruciform DNA, conferring on it an open structure. The RuvB hexamer acts as an ATP-dependent pump, pulling dsDNA into and through the RuvAB complex. HJ branch migration allows RuvC to scan DNA until it finds its consensus sequence, where it cleaves and resolves the cruciform DNA. This Bacillus velezensis (strain DSM 23117 / BGSC 10A6 / LMG 26770 / FZB42) (Bacillus amyloliquefaciens subsp. plantarum) protein is Holliday junction branch migration complex subunit RuvA.